Consider the following 338-residue polypeptide: Ketol-acid reductoisomerase (NADP(+)) (338 aa).

The KARI N-terminal Rossmann domain maps to 1–181; that stretch reads MKVYYDKDAD…GGGKAGIIET (181 aa). Residues 24 to 27, Arg-47, and Ser-52 contribute to the NADP(+) site; that span reads YGSQ. His-107 is a catalytic residue. An NADP(+)-binding site is contributed by Gly-133. The 146-residue stretch at 182-327 folds into the KARI C-terminal knotted domain; the sequence is NFREETETDL…EKLRAMMPWI (146 aa). Mg(2+) is bound by residues Asp-190, Glu-194, Glu-226, and Glu-230. Ser-251 provides a ligand contact to substrate.

Belongs to the ketol-acid reductoisomerase family. The cofactor is Mg(2+).

The enzyme catalyses (2R)-2,3-dihydroxy-3-methylbutanoate + NADP(+) = (2S)-2-acetolactate + NADPH + H(+). It carries out the reaction (2R,3R)-2,3-dihydroxy-3-methylpentanoate + NADP(+) = (S)-2-ethyl-2-hydroxy-3-oxobutanoate + NADPH + H(+). The protein operates within amino-acid biosynthesis; L-isoleucine biosynthesis; L-isoleucine from 2-oxobutanoate: step 2/4. It participates in amino-acid biosynthesis; L-valine biosynthesis; L-valine from pyruvate: step 2/4. Involved in the biosynthesis of branched-chain amino acids (BCAA). Catalyzes an alkyl-migration followed by a ketol-acid reduction of (S)-2-acetolactate (S2AL) to yield (R)-2,3-dihydroxy-isovalerate. In the isomerase reaction, S2AL is rearranged via a Mg-dependent methyl migration to produce 3-hydroxy-3-methyl-2-ketobutyrate (HMKB). In the reductase reaction, this 2-ketoacid undergoes a metal-dependent reduction by NADPH to yield (R)-2,3-dihydroxy-isovalerate. The protein is Ketol-acid reductoisomerase (NADP(+)) of Methylibium petroleiphilum (strain ATCC BAA-1232 / LMG 22953 / PM1).